A 327-amino-acid chain; its full sequence is Complex I intermediate-associated protein 30, mitochondrial (327 aa).

A mitochondrion-targeting transit peptide spans 1-24 (MALVHKLLRGTYFLRKFXKPTSAL). Positions 42–63 (PVASPGKASSQRKTEGDLQGDH) are disordered. A compositionally biased stretch (basic and acidic residues) spans 53-63 (RKTEGDLQGDH). Phosphoserine is present on Ser-318.

Belongs to the CIA30 family. Part of the mitochondrial complex I assembly/MCIA complex that comprises at least the core subunits TMEM126B, NDUFAF1, ECSIT and ACAD9 and complement subunits such as COA1 and TMEM186. Interacts with ECSIT. Interacts with ACAD9. At early stages of complex I assembly, it is found in intermediate subcomplexes that contain different subunits including NDUFB6, NDUFA6, NDUFA9, NDUFS3, NDUFS7, ND1, ND2 and ND3. Interacts with TMEM70 and TMEM242.

It localises to the mitochondrion. The protein localises to the mitochondrion matrix. As part of the MCIA complex, involved in the assembly of the mitochondrial complex I. In Pan troglodytes (Chimpanzee), this protein is Complex I intermediate-associated protein 30, mitochondrial.